The sequence spans 235 residues: 2,3,4,5-tetrahydropyridine-2,6-dicarboxylate N-acetyltransferase (235 aa).

The protein belongs to the transferase hexapeptide repeat family. DapH subfamily.

The enzyme catalyses (S)-2,3,4,5-tetrahydrodipicolinate + acetyl-CoA + H2O = L-2-acetamido-6-oxoheptanedioate + CoA. It participates in amino-acid biosynthesis; L-lysine biosynthesis via DAP pathway; LL-2,6-diaminopimelate from (S)-tetrahydrodipicolinate (acetylase route): step 1/3. Catalyzes the transfer of an acetyl group from acetyl-CoA to tetrahydrodipicolinate. The polypeptide is 2,3,4,5-tetrahydropyridine-2,6-dicarboxylate N-acetyltransferase (Exiguobacterium sibiricum (strain DSM 17290 / CCUG 55495 / CIP 109462 / JCM 13490 / 255-15)).